Consider the following 288-residue polypeptide: uncharacterized protein (288 aa).

This sequence to M.bovis Mb1522c, M.leprae ML1804 and M.avium MAV321.

This is an uncharacterized protein from Mycobacterium tuberculosis (strain ATCC 25618 / H37Rv).